A 604-amino-acid chain; its full sequence is Putative JmjC domain-containing protein L887 (604 aa).

The JmjC domain occupies 1–127 (MNNMKKIIII…PNNKLNLIQP (127 aa)). Residues 4 to 24 (MKKIIIISIIIIIIIVLLFYI) form a helical membrane-spanning segment.

It is found in the membrane. The polypeptide is Putative JmjC domain-containing protein L887 (Acanthamoeba polyphaga (Amoeba)).